A 235-amino-acid chain; its full sequence is Uridylate kinase (235 aa).

Lys9–Gly12 contacts ATP. A UMP-binding site is contributed by Gly51. Residues Gly52 and Arg56 each coordinate ATP. Residues Asp71 and Thr132–Thr139 each bind UMP. Residues Thr159, Tyr165, and Asp168 each contribute to the ATP site.

This sequence belongs to the UMP kinase family. Homohexamer.

Its subcellular location is the cytoplasm. The enzyme catalyses UMP + ATP = UDP + ADP. The protein operates within pyrimidine metabolism; CTP biosynthesis via de novo pathway; UDP from UMP (UMPK route): step 1/1. Its activity is regulated as follows. Inhibited by UTP. Catalyzes the reversible phosphorylation of UMP to UDP. The polypeptide is Uridylate kinase (Christiangramia forsetii (strain DSM 17595 / CGMCC 1.15422 / KT0803) (Gramella forsetii)).